We begin with the raw amino-acid sequence, 464 residues long: Agamous-like MADS-box protein AGL92 (464 aa).

One can recognise an MADS-box domain in the interval 1–60 (MRTKTKLVLIPDRHFRRATFRKRNAGIRKKLHELTTLCDIKACAVIYSPFENPTVWPSTE). The stretch at 85 to 114 (ETFLRDQITKEQNKLESLRRENRETQLKHF) forms a coiled coil. The tract at residues 443–464 (TSTGHMPSTTTTTTNNNNNNNV) is disordered. Low complexity predominate over residues 451–464 (TTTTTTNNNNNNNV).

Interacts with AGL62.

The protein resides in the nucleus. In terms of biological role, putative transcription factor. The sequence is that of Agamous-like MADS-box protein AGL92 (AGL92) from Arabidopsis thaliana (Mouse-ear cress).